A 56-amino-acid polypeptide reads, in one-letter code: UPF0391 membrane protein HCH_04387 (56 aa).

2 consecutive transmembrane segments (helical) span residues 6-26 (IVFF…IAAA) and 30-50 (IAQI…IAGG).

The protein belongs to the UPF0391 family.

The protein localises to the cell membrane. This is UPF0391 membrane protein HCH_04387 from Hahella chejuensis (strain KCTC 2396).